A 282-amino-acid polypeptide reads, in one-letter code: Pantothenate synthetase (282 aa).

32–39 (MGALHEGH) serves as a coordination point for ATP. The active-site Proton donor is the histidine 39. Glutamine 63 contributes to the (R)-pantoate binding site. Position 63 (glutamine 63) interacts with beta-alanine. 149–152 (GEKD) is a binding site for ATP. Glutamine 155 provides a ligand contact to (R)-pantoate. ATP-binding positions include valine 178 and 186–189 (LSSR).

It belongs to the pantothenate synthetase family. Homodimer.

The protein localises to the cytoplasm. It catalyses the reaction (R)-pantoate + beta-alanine + ATP = (R)-pantothenate + AMP + diphosphate + H(+). The protein operates within cofactor biosynthesis; (R)-pantothenate biosynthesis; (R)-pantothenate from (R)-pantoate and beta-alanine: step 1/1. In terms of biological role, catalyzes the condensation of pantoate with beta-alanine in an ATP-dependent reaction via a pantoyl-adenylate intermediate. The chain is Pantothenate synthetase from Paracoccus denitrificans (strain Pd 1222).